The following is a 292-amino-acid chain: MMRIALFLLTNLAVMLVFGLVLSLTGIQSSSVQGLMIMAGLFGFGGSFVSLLMSKWMALRSVGGEVIEQPRNETENWLLETVRRQSQQAGIAMPQVAIYHAPDINAFATGARRNASLVAVSTGLLQSMSRDEAEAVIAHEISHVANGDMVTMTLIQGIVNTFVIFISRLIAQAAAGFLGNRDGEGEGNGNPMIYFGVSMVLELVFGILASIITMWFSRHREFYADAGSAKLVGREKMIAALQRLKTSYEPQEAGNMMAFCINGKSKSFSELFMSHPPLDKRIEALRSGQYLK.

Helical transmembrane passes span 4-24 and 34-54; these read IALF…VLSL and GLMI…LLMS. Zn(2+) is bound at residue histidine 139. Residue glutamate 140 is part of the active site. Histidine 143 is a Zn(2+) binding site. 2 helical membrane-spanning segments follow: residues 158-178 and 192-212; these read IVNT…AGFL and MIYF…ASII. Position 221 (glutamate 221) interacts with Zn(2+).

This sequence belongs to the peptidase M48B family. It depends on Zn(2+) as a cofactor.

The protein resides in the cell inner membrane. The chain is Protease HtpX from Serratia proteamaculans (strain 568).